An 87-amino-acid polypeptide reads, in one-letter code: U3-theraphotoxin-Cg1b (87 aa).

The signal sequence occupies residues 1 to 23; the sequence is MRTFTLIAILTCAVLVIFHVSAA. Positions 24–48 are excised as a propeptide; it reads EELEAQDVIQPEDIFTGVATLEEDR. 3 disulfides stabilise this stretch: C52–C65, C56–C79, and C73–C84.

Belongs to the neurotoxin 12 (Hwtx-2) family. 03 (juruin) subfamily. Expressed by the venom gland.

Its subcellular location is the secreted. Probable ion channel inhibitor. In Chilobrachys guangxiensis (Chinese earth tiger tarantula), this protein is U3-theraphotoxin-Cg1b.